The primary structure comprises 512 residues: Protein male-specific lethal-3 (512 aa).

Residues 11–90 (FHKGEIVLCY…QLQRELAEAA (80 aa)) enclose the Chromo domain. Residues 98–175 (YSYKGTPDKP…DGRLKGNRGR (78 aa)) are disordered. Positions 149 to 169 (RTRDNSGGKRKEKPPSGDGRL) are enriched in basic and acidic residues. The 305-residue stretch at 196 to 500 (QEDRIMMRVS…STALPQEDLQ (305 aa)) folds into the MRG domain.

Component of the male-specific lethal (MSL) histone acetyltransferase complex, composed of mof, mle, msl-1, msl-2 and msl-3 proteins, as well as roX1 and roX2 non-coding RNAs. Component of a maternal MSL subcomplex composed of mof, msl-1 and msl-3. In terms of processing, ubiquitinated by msl-2.

It is found in the nucleus. The protein resides in the chromosome. Component of the male-specific lethal (MSL) histone acetyltransferase complex, a multiprotein complex essential for elevating transcription of the single X chromosome in the male (X chromosome dosage compensation). The MSL complex specifically associates with the single X chromosome in males and mediates formation of H4K16ac, promoting a two-fold activation of X chromosome. Acts as a histone reader that specifically recognizes and binds histone H3 trimethylated at 'Lys-36' (H3K36me3) and histone H4 monomethylated at 'Lys-20' (H4K20me1). Within the MSL complex, mediates the spreading of the MSL complex from initiation sites on the male X chromosome to flanking chromatin. Following initial recruitment of the MSL complex to male X chromosome by msl-2, msl-3 binds H3K36me3 and promotes spreading of the MSL complex in cis. In addition to its role in dosage compensation in males, promotes germline stem cell differentiation in females: recognizes and binds H3K36me3, promoting recruitment of the ATAC complex and transcription of genes, such as RpS19b. The chain is Protein male-specific lethal-3 from Drosophila melanogaster (Fruit fly).